The primary structure comprises 158 residues: Snaclec stejaggregin-A subunit alpha (158 aa).

A signal peptide spans 1 to 23 (MGRFISVSFGLLVVFLSLSGTGA). Disulfide bonds link Cys-27/Cys-38, Cys-55/Cys-152, and Cys-127/Cys-144. The region spanning 34–153 (YDWYCYKPFN…CQAKNPFVCK (120 aa)) is the C-type lectin domain.

Belongs to the snaclec family. Heteromultimer; disulfide-linked. In terms of tissue distribution, expressed by the venom gland.

The protein resides in the secreted. In terms of biological role, interferes with one step of hemostasis (modulation of platelet aggregation, or coagulation cascade, for example). The sequence is that of Snaclec stejaggregin-A subunit alpha from Trimeresurus stejnegeri (Chinese green tree viper).